The following is a 162-amino-acid chain: MEKIFERLMYASRWIMAPIYLGLSLVLLGLGIKFFQEIFHILPIIFEMTEVDLVLVTLSLIDITLVGGLIVMVMFSGYENFVSQLDVGEDSEKLSWLGKLDSGSLKNKVAASIVAISSIHLLKIFMDVKNIDNDKIMWYLLIHITFVLSAFAMGYLDKMTRK.

3 consecutive transmembrane segments (helical) span residues 10 to 32, 53 to 75, and 136 to 156; these read YASR…GLGI, LVLV…MVMF, and IMWY…MGYL.

The protein belongs to the UPF0114 family.

It is found in the cell membrane. The protein is UPF0114 protein SO_3997 of Shewanella oneidensis (strain ATCC 700550 / JCM 31522 / CIP 106686 / LMG 19005 / NCIMB 14063 / MR-1).